The chain runs to 460 residues: MDSKQSSELVFTVRRQEPELIAPAKPTPRETKFLSDIDDQEGLRFQIPVINFYRKDSSMGGKDPVEVIKKAIAETLVFYYPFAGRLREGNDRKLMVDCTGEGVMFVEANADVTLEEFGDELQPPFPCLEELLYDVPGSAGVLHCPLLLIQVTRLRCGGFIFALRLNHTMSDAPGLVQFMTAVGEMARGATAPSTLPVWCRELLNARNPPQVTCTHHEYEEVPDTKGTLIPLDDMVHRSFFFGPTEVSALRRFVPPHLHNCSTFEVLTAALWRCRTISIKPDPEEEVRVLCIVNARSRFNPQLPSGYYGNAFAFPVAVTTAEKLCKNPLGYALELVKKTKSDVTEEYMKSVADLMVIKGRPHFTVVRTYLVSDVTRAGFGEVDFGWGKAVYGGPAKGGVGAIPGVASFYIPFRNKKGENGIVVPICLPGFAMEKFVKELDSMLKGDAQLDNKKYAFITPAL.

Residues His167 and Asp382 each act as proton acceptor in the active site.

Belongs to the plant acyltransferase family. In terms of tissue distribution, specifically expressed in flowers, mainly in the limb of flowers corollas, and, at low levels, in roots, stems, sepals and leaves.

It catalyses the reaction benzyl alcohol + benzoyl-CoA = benzyl benzoate + CoA. It carries out the reaction benzyl alcohol + acetyl-CoA = benzyl acetate + CoA. The catalysed reaction is 3-hydroxybenzyl alcohol + acetyl-CoA = 3-hydroxy-benzyl acetate + CoA. The enzyme catalyses 3-hydroxybenzyl alcohol + benzoyl-CoA = 3-hydroxy-benzyl benzoate + CoA. It catalyses the reaction 2-phenylethanol + benzoyl-CoA = phenethyl benzoate + CoA. It carries out the reaction (3Z)-hex-3-en-1-ol + benzoyl-CoA = (3Z)-hex-3-en-1-yl benzoate + CoA. The catalysed reaction is (2E)-geraniol + acetyl-CoA = (2E)-geranyl acetate + CoA. The enzyme catalyses butan-1-ol + benzoyl-CoA = butyl benzoate + CoA. It catalyses the reaction (2E)-geraniol + benzoyl-CoA = (2E)-geranyl benzoate + CoA. It carries out the reaction octan-1-ol + benzoyl-CoA = octyl benzoate + CoA. Its pathway is aromatic compound metabolism; benzoyl-CoA degradation. In terms of biological role, involved in the production of volatile organic compounds (VOCs), including floral volatile benzenoids and phenylpropanoids (FVBP), in flowers of fragrant cultivars (e.g. cv. Mitchell and cv. V26), scent attracting pollinators (e.g. the night-active hawkmoth pollinator Manduca sexta). Acyltransferase that catalyzes the transfer of benzoyl and acetyl moieties to a large variety of potential substrate alcohols, and involved in the formation of volatile esters benzyl benzoate and phenylethyl benzoate from benzoyl-CoA. With acetyl-CoA, mainly active on benzyl alcohol, and, to a lower extent, on 3-hydroxybenzyl alcohol, geraniol, and 2-phenylethanol, but barely active on butanol, 1-octanol, 4-hydroxy-benzyl alcohol, 2-hexanol, cis-3-hexen-1-ol and linalool. With benzoyl-CoA, mainly active on benzyl alcohol, but also efficient on several substrates, including 3-hydroxybenzyl alcohol, 2-phenylethanol, geraniol, butanol, cis-3-hexen-1-ol and 1-octanol. This is Benzyl alcohol O-benzoyltransferase from Petunia hybrida (Petunia).